Here is a 376-residue protein sequence, read N- to C-terminus: Beta-centractin (376 aa).

M1 bears the N-acetylmethionine mark. Y4 carries the 3'-nitrotyrosine modification.

It belongs to the actin family. ARP1 subfamily.

It localises to the cytoplasm. The protein localises to the cytoskeleton. It is found in the microtubule organizing center. The protein resides in the centrosome. Component of a multi-subunit complex involved in microtubule based vesicle motility. It is associated with the centrosome. The sequence is that of Beta-centractin (ACTR1B) from Bos taurus (Bovine).